The following is a 504-amino-acid chain: ATP synthase subunit alpha, chloroplastic (504 aa).

170 to 177 (GDRQTGKT) provides a ligand contact to ATP.

It belongs to the ATPase alpha/beta chains family. As to quaternary structure, F-type ATPases have 2 components, CF(1) - the catalytic core - and CF(0) - the membrane proton channel. CF(1) has five subunits: alpha(3), beta(3), gamma(1), delta(1), epsilon(1). CF(0) has four main subunits: a, b, b' and c.

It is found in the plastid. It localises to the chloroplast thylakoid membrane. The enzyme catalyses ATP + H2O + 4 H(+)(in) = ADP + phosphate + 5 H(+)(out). Functionally, produces ATP from ADP in the presence of a proton gradient across the membrane. The alpha chain is a regulatory subunit. The polypeptide is ATP synthase subunit alpha, chloroplastic (Pyropia yezoensis (Susabi-nori)).